Here is a 417-residue protein sequence, read N- to C-terminus: D-amino acid dehydrogenase (417 aa).

3 to 17 (VVILGSGVIGVTSAW) lines the FAD pocket.

Belongs to the DadA oxidoreductase family. Requires FAD as cofactor.

It carries out the reaction a D-alpha-amino acid + A + H2O = a 2-oxocarboxylate + AH2 + NH4(+). The protein operates within amino-acid degradation; D-alanine degradation; NH(3) and pyruvate from D-alanine: step 1/1. Its function is as follows. Oxidative deamination of D-amino acids. In Edwardsiella ictaluri (strain 93-146), this protein is D-amino acid dehydrogenase.